We begin with the raw amino-acid sequence, 274 residues long: Thiamine kinase (274 aa).

It belongs to the thiamine kinase family.

It catalyses the reaction thiamine + ATP = thiamine phosphate + ADP + H(+). The protein operates within cofactor biosynthesis; thiamine diphosphate biosynthesis; thiamine phosphate from thiamine: step 1/1. Functionally, catalyzes the ATP-dependent phosphorylation of thiamine to thiamine phosphate. Is involved in thiamine salvage. This is Thiamine kinase from Salmonella typhi.